We begin with the raw amino-acid sequence, 106 residues long: Nucleoid-associated protein XOO1065 (106 aa).

The span at 80–89 shows a compositional bias: basic and acidic residues; that stretch reads KIDAESKDRM. Positions 80–106 are disordered; sequence KIDAESKDRMGSATAGMQLPPGMKLPF.

The protein belongs to the YbaB/EbfC family. As to quaternary structure, homodimer.

The protein resides in the cytoplasm. It is found in the nucleoid. Functionally, binds to DNA and alters its conformation. May be involved in regulation of gene expression, nucleoid organization and DNA protection. The chain is Nucleoid-associated protein XOO1065 from Xanthomonas oryzae pv. oryzae (strain KACC10331 / KXO85).